The sequence spans 433 residues: Glutamate-1-semialdehyde 2,1-aminomutase (433 aa).

K272 is subject to N6-(pyridoxal phosphate)lysine.

Belongs to the class-III pyridoxal-phosphate-dependent aminotransferase family. HemL subfamily. As to quaternary structure, homodimer. Requires pyridoxal 5'-phosphate as cofactor.

The protein resides in the cytoplasm. It carries out the reaction (S)-4-amino-5-oxopentanoate = 5-aminolevulinate. It functions in the pathway porphyrin-containing compound metabolism; protoporphyrin-IX biosynthesis; 5-aminolevulinate from L-glutamyl-tRNA(Glu): step 2/2. The polypeptide is Glutamate-1-semialdehyde 2,1-aminomutase (Methylacidiphilum infernorum (isolate V4) (Methylokorus infernorum (strain V4))).